Consider the following 201-residue polypeptide: Small ribosomal subunit protein uS5 (201 aa).

Residues 1-28 form a disordered region; it reads MAHQNEQRGGGDRGRGRGRGRDRDQERD. The S5 DRBM domain maps to 31–94; that stretch reads LVDKLVHINR…DEAKKNMIRV (64 aa). Residues 173–201 form a disordered region; that stretch reads SVAAKRGLKVGDLVNRRDDGASSPEAIEA.

Belongs to the universal ribosomal protein uS5 family. In terms of assembly, part of the 30S ribosomal subunit. Contacts proteins S4 and S8.

With S4 and S12 plays an important role in translational accuracy. Its function is as follows. Located at the back of the 30S subunit body where it stabilizes the conformation of the head with respect to the body. The protein is Small ribosomal subunit protein uS5 of Maricaulis maris (strain MCS10) (Caulobacter maris).